The primary structure comprises 615 residues: DNA mismatch repair protein MutL (615 aa).

Belongs to the DNA mismatch repair MutL/HexB family.

Its function is as follows. This protein is involved in the repair of mismatches in DNA. It is required for dam-dependent methyl-directed DNA mismatch repair. May act as a 'molecular matchmaker', a protein that promotes the formation of a stable complex between two or more DNA-binding proteins in an ATP-dependent manner without itself being part of a final effector complex. This is DNA mismatch repair protein MutL from Parabacteroides distasonis (strain ATCC 8503 / DSM 20701 / CIP 104284 / JCM 5825 / NCTC 11152).